The sequence spans 404 residues: Triose phosphate/phosphate translocator, chloroplastic (404 aa).

The N-terminal 74 residues, 1 to 74, are a transit peptide targeting the chloroplast; sequence MESRVLSRTT…GPVCSRREKT (74 aa). Residues 75–98 are Chloroplast intermembrane-facing; the sequence is AVQPCRAASGSSGEAKTGFLEKYP. A helical membrane pass occupies residues 99-119; sequence ALVTGSFFFMWYFLNVIFNIL. Residues 120-131 are Lumenal-facing; that stretch reads NKKIYNYFPYPY. Residues 132-152 form a helical membrane-spanning segment; that stretch reads FVSVIHLFVGVVYCLASWSVG. Over 153-209 the chain is Chloroplast intermembrane; that stretch reads LPKRAPMDSKLLKLLIPVAVCHAIGHVTSNVSFAAVAVSFTHTIKALEPFFNAAASQ. A helical membrane pass occupies residues 210–230; the sequence is FVLGQSIPITLWLSLAPVVIG. Residues 231–274 are Lumenal-facing; it reads VSMASLTELSFNWLGFISAMISNVSFTYRSLYSKKAMTDMDSTN. Residues 275-294 traverse the membrane as a helical segment; the sequence is IYAYISIIALFVCLPPAIIV. Topologically, residues 295–372 are chloroplast intermembrane; sequence EGPQLMKHGF…IAFGNKISTQ (78 aa). A helical membrane pass occupies residues 373–393; that stretch reads TAIGTSIAIAGVALYSLIKAK. Residues 394 to 404 lie on the Lumenal side of the membrane; that stretch reads MEEEKRQMKST.

This sequence belongs to the TPT transporter family. TPT (TC 2.A.7.9) subfamily. Post-translationally, the N-terminus is blocked.

The protein localises to the plastid. It localises to the chloroplast membrane. In terms of biological role, mediates the export of fixed carbons from the chloroplasts into the cytosol in the form of triose phosphates. This chain is Triose phosphate/phosphate translocator, chloroplastic, found in Spinacia oleracea (Spinach).